The following is a 168-amino-acid chain: Endoribonuclease YbeY (168 aa).

Zn(2+) is bound by residues histidine 128, histidine 132, and histidine 138.

This sequence belongs to the endoribonuclease YbeY family. Zn(2+) is required as a cofactor.

It localises to the cytoplasm. Functionally, single strand-specific metallo-endoribonuclease involved in late-stage 70S ribosome quality control and in maturation of the 3' terminus of the 16S rRNA. The polypeptide is Endoribonuclease YbeY (Sphingopyxis alaskensis (strain DSM 13593 / LMG 18877 / RB2256) (Sphingomonas alaskensis)).